The primary structure comprises 314 residues: Malate dehydrogenase (314 aa).

NAD(+) is bound by residues G13–G18 and D37. Residues R88 and R94 each contribute to the substrate site. Residues N101 and V124–N126 contribute to the NAD(+) site. Substrate-binding residues include N126 and R157. Residue H181 is the Proton acceptor of the active site.

It belongs to the LDH/MDH superfamily. MDH type 3 family.

It catalyses the reaction (S)-malate + NAD(+) = oxaloacetate + NADH + H(+). In terms of biological role, catalyzes the reversible oxidation of malate to oxaloacetate. This Myxococcus xanthus protein is Malate dehydrogenase.